The sequence spans 243 residues: 1-(5-phosphoribosyl)-5-[(5-phosphoribosylamino)methylideneamino] imidazole-4-carboxamide isomerase (243 aa).

D14 acts as the Proton acceptor in catalysis. D135 (proton donor) is an active-site residue.

This sequence belongs to the HisA/HisF family.

It localises to the cytoplasm. It carries out the reaction 1-(5-phospho-beta-D-ribosyl)-5-[(5-phospho-beta-D-ribosylamino)methylideneamino]imidazole-4-carboxamide = 5-[(5-phospho-1-deoxy-D-ribulos-1-ylimino)methylamino]-1-(5-phospho-beta-D-ribosyl)imidazole-4-carboxamide. It functions in the pathway amino-acid biosynthesis; L-histidine biosynthesis; L-histidine from 5-phospho-alpha-D-ribose 1-diphosphate: step 4/9. In Rubrobacter xylanophilus (strain DSM 9941 / JCM 11954 / NBRC 16129 / PRD-1), this protein is 1-(5-phosphoribosyl)-5-[(5-phosphoribosylamino)methylideneamino] imidazole-4-carboxamide isomerase.